A 605-amino-acid polypeptide reads, in one-letter code: Condensin-2 complex subunit H2 (605 aa).

A Phosphothreonine modification is found at threonine 19. 5 positions are modified to phosphoserine: serine 95, serine 200, serine 208, serine 228, and serine 232. The disordered stretch occupies residues 194-331 (LEPEGMSPME…PFDSLESKPF (138 aa)). A compositionally biased stretch (acidic residues) spans 256–266 (GEDEDAEEAVE). Serine 282, serine 284, serine 466, and serine 492 each carry phosphoserine.

The protein belongs to the CND2 H2 (condensin-2 subunit 2) family. As to quaternary structure, component of the condensin-2 complex, which contains the SMC2 and SMC4 heterodimer, and three non SMC subunits, NCAPG2, NCAPH2 and NCAPD3 that probably regulate the complex.

The protein localises to the nucleus. It is found in the chromosome. Regulatory subunit of the condensin-2 complex, a complex that seems to provide chromosomes with an additional level of organization and rigidity and in establishing mitotic chromosome architecture. May promote the resolution of double-strand DNA catenanes (intertwines) between sister chromatids. Condensin-mediated compaction likely increases tension in catenated sister chromatids, providing directionality for type II topoisomerase-mediated strand exchanges toward chromatid decatenation. Required for decatenation of chromatin bridges at anaphase. Early in neurogenesis, may play an essential role to ensure accurate mitotic chromosome condensation in neuron stem cells, ultimately affecting neuron pool and cortex size. Seems to have lineage-specific role in T-cell development. The polypeptide is Condensin-2 complex subunit H2 (NCAPH2) (Homo sapiens (Human)).